A 300-amino-acid polypeptide reads, in one-letter code: Probable alpha-L-glutamate ligase (300 aa).

The 184-residue stretch at 104 to 287 (LQLLARQGID…IAGKMISWIE (184 aa)) folds into the ATP-grasp domain. ATP-binding positions include Lys-141, 178 to 179 (EY), Asp-187, and 211 to 213 (RSN). Residues Asp-248, Glu-260, and Asn-262 each contribute to the Mg(2+) site. 3 residues coordinate Mn(2+): Asp-248, Glu-260, and Asn-262.

Belongs to the RimK family. Mg(2+) serves as cofactor. It depends on Mn(2+) as a cofactor.

This Enterobacter sp. (strain 638) protein is Probable alpha-L-glutamate ligase.